The sequence spans 234 residues: Phosphoribosylaminoimidazole-succinocarboxamide synthase (234 aa).

Belongs to the SAICAR synthetase family.

The enzyme catalyses 5-amino-1-(5-phospho-D-ribosyl)imidazole-4-carboxylate + L-aspartate + ATP = (2S)-2-[5-amino-1-(5-phospho-beta-D-ribosyl)imidazole-4-carboxamido]succinate + ADP + phosphate + 2 H(+). The protein operates within purine metabolism; IMP biosynthesis via de novo pathway; 5-amino-1-(5-phospho-D-ribosyl)imidazole-4-carboxamide from 5-amino-1-(5-phospho-D-ribosyl)imidazole-4-carboxylate: step 1/2. In Exiguobacterium sp. (strain ATCC BAA-1283 / AT1b), this protein is Phosphoribosylaminoimidazole-succinocarboxamide synthase.